A 106-amino-acid chain; its full sequence is Isocitrate dehydrogenase [NAD] subunit gamma, mitochondrial (106 aa).

It belongs to the isocitrate and isopropylmalate dehydrogenases family. As to quaternary structure, heterooligomer of subunits alpha (IDH3A), beta (IDH3B), and gamma (IDH3G) in the apparent ratio of 2:1:1. The heterodimer containing one IDH3A and one IDH3B subunit and the heterodimer containing one IDH3A and one IDH3G subunit assemble into a heterotetramer (which contains two subunits of IDH3A, one of IDH3B and one of IDH3G) and further into the heterooctamer.

The protein localises to the mitochondrion. Its activity is regulated as follows. The heterotetramer and the heterodimer composed of IDH3A and IDH3G subunits can be allosterically activated by citrate (CIT) or/and ADP, and the two activators can act independently or synergistically. The heterodimer composed of IDH3A and IDH3B subunits cannot be allosterically regulated and the allosteric regulation of the heterotetramer is through the IDH3G subunit and not the IDH3B subunit. The IDH3G subunit contains the allosteric site which consists of a CIT-binding site and an ADP-binding site, and the binding of CIT and ADP causes conformational changes at the allosteric site which are transmitted to the active site in the catalytic subunit (IDH3A) through a cascade of conformational changes at the heterodimer interface, leading to stabilization of the isocitrate-binding at the active site and thus activation of the enzyme. ATP can activate the heterotetramer and the heterodimer composed of IDH3A and IDH3G subunits at low concentrations but inhibits their activities at high concentrations, whereas ATP exhibits only inhibitory effect on the heterodimer composed of IDH3A and IDH3B subunits. Its function is as follows. Regulatory subunit which plays a role in the allosteric regulation of the enzyme catalyzing the decarboxylation of isocitrate (ICT) into alpha-ketoglutarate. The heterodimer composed of the alpha (IDH3A) and beta (IDH3B) subunits and the heterodimer composed of the alpha (IDH3A) and gamma (IDH3G) subunits, have considerable basal activity but the full activity of the heterotetramer (containing two subunits of IDH3A, one of IDH3B and one of IDH3G) requires the assembly and cooperative function of both heterodimers. This chain is Isocitrate dehydrogenase [NAD] subunit gamma, mitochondrial (IDH3G), found in Sus scrofa (Pig).